The following is a 152-amino-acid chain: Ribonuclease H (152 aa).

The RNase H type-1 domain occupies 6 to 147; the sequence is KKNRVIAYTD…ADELANKAIA (142 aa). Positions 15, 53, 75, and 139 each coordinate Mg(2+).

The protein belongs to the RNase H family. In terms of assembly, monomer. Mg(2+) serves as cofactor.

It localises to the cytoplasm. It catalyses the reaction Endonucleolytic cleavage to 5'-phosphomonoester.. In terms of biological role, endonuclease that specifically degrades the RNA of RNA-DNA hybrids. The sequence is that of Ribonuclease H from Francisella tularensis subsp. tularensis (strain FSC 198).